A 325-amino-acid polypeptide reads, in one-letter code: Helicase VP6-A (325 aa).

Disordered stretches follow at residues 1 to 127 and 174 to 230; these read MLLA…NGRR and EGVA…EPAR. Composition is skewed to basic and acidic residues over residues 8 to 18, 32 to 54, 61 to 79, and 92 to 105; these read VIKRSSEELKQ, EGGK…KDGE, GQKE…DRRI, and PGER…RGDG. Position 106 (Lys106) interacts with ATP. Positions 106-122 are enriched in gly residues; the sequence is KVGGGGGDADAGVGATG. Basic and acidic residues predominate over residues 175-229; sequence GVAEQTERSRDLRRKEKNGTHAKAVERGGRKQRKESHGDAQREGVEEEKTSEEPA.

It belongs to the orbivirus VP6 family. In terms of assembly, homohexamer.

It localises to the virion. The catalysed reaction is ATP + H2O = ADP + phosphate + H(+). Its function is as follows. ATP dependent RNA helicase essential for RNA packaging and viral transcription. Possesses ss- and dsRNA-binding capacity. The polypeptide is Helicase VP6-A (Segment-9) (Bluetongue virus 13 (isolate USA) (BTV 13)).